The primary structure comprises 186 residues: MKNNDSKISKYISLILRHKPEEIGLKLDEHGYLVVLDLIEGINKSYEGFSMDDLERIVREDSKGRYSFNEDKSKIRANQGHSIKVDLGLEEIKPPKVLYHGTGRKYLESILKNGLIKKERQYIHLSKDRETASIVGKRHGDLVILEVDSESMFNDGIKFYLSKNNVWLCNYVPKKYIKELNLEEVF.

This sequence belongs to the KptA/TPT1 family.

Removes the 2'-phosphate from RNA via an intermediate in which the phosphate is ADP-ribosylated by NAD followed by a presumed transesterification to release the RNA and generate ADP-ribose 1''-2''-cyclic phosphate (APPR&gt;P). May function as an ADP-ribosylase. In Clostridium perfringens (strain SM101 / Type A), this protein is Probable RNA 2'-phosphotransferase.